The primary structure comprises 197 residues: MSTILIAIIALAVLAAVFGAILGFASIRFKVEADPIVDQIDTILPQTQCGQCGYPGCRPYAEAIANGDKINKCPPGGQATIEKLADLMGVEVEDSAHDLDNKVKTVAFIHEDMCIGCTKCIQACPVDAIVGGTKALHTVIKDECTGCDLCVAPCPTDCIEMIPVATTTENWKWQMNIIPVTDITNQATDATASEPKA.

The segment at 1–26 is hydrophobic; that stretch reads MSTILIAIIALAVLAAVFGAILGFAS. Residues 32–90 form the 4Fe-4S domain; sequence EADPIVDQIDTILPQTQCGQCGYPGCRPYAEAIANGDKINKCPPGGQATIEKLADLMGV. Residues Cys49, Cys52, Cys57, Cys73, Cys114, Cys117, Cys120, Cys124, Cys144, Cys147, Cys150, and Cys154 each contribute to the [4Fe-4S] cluster site. 4Fe-4S ferredoxin-type domains lie at 105 to 134 and 135 to 164; these read TVAFIHEDMCIGCTKCIQACPVDAIVGGTK and ALHTVIKDECTGCDLCVAPCPTDCIEMIPV.

Belongs to the 4Fe4S bacterial-type ferredoxin family. RnfB subfamily. As to quaternary structure, the complex is composed of six subunits: RnfA, RnfB, RnfC, RnfD, RnfE and RnfG. The cofactor is [4Fe-4S] cluster.

The protein localises to the cell inner membrane. Its function is as follows. Part of a membrane-bound complex that couples electron transfer with translocation of ions across the membrane. The polypeptide is Ion-translocating oxidoreductase complex subunit B (Vibrio atlanticus (strain LGP32) (Vibrio splendidus (strain Mel32))).